Reading from the N-terminus, the 68-residue chain is Large ribosomal subunit protein uL29 (68 aa).

This sequence belongs to the universal ribosomal protein uL29 family.

The sequence is that of Large ribosomal subunit protein uL29 from Chloroflexus aggregans (strain MD-66 / DSM 9485).